The chain runs to 320 residues: Phosphate acyltransferase (320 aa).

This sequence belongs to the PlsX family. In terms of assembly, homodimer. Probably interacts with PlsY.

The protein localises to the cytoplasm. It catalyses the reaction a fatty acyl-[ACP] + phosphate = an acyl phosphate + holo-[ACP]. It participates in lipid metabolism; phospholipid metabolism. In terms of biological role, catalyzes the reversible formation of acyl-phosphate (acyl-PO(4)) from acyl-[acyl-carrier-protein] (acyl-ACP). This enzyme utilizes acyl-ACP as fatty acyl donor, but not acyl-CoA. In Syntrophomonas wolfei subsp. wolfei (strain DSM 2245B / Goettingen), this protein is Phosphate acyltransferase.